The sequence spans 122 residues: Large ribosomal subunit protein bL12 (122 aa).

This sequence belongs to the bacterial ribosomal protein bL12 family. As to quaternary structure, homodimer. Part of the ribosomal stalk of the 50S ribosomal subunit. Forms a multimeric L10(L12)X complex, where L10 forms an elongated spine to which 2 to 4 L12 dimers bind in a sequential fashion. Binds GTP-bound translation factors.

Its function is as follows. Forms part of the ribosomal stalk which helps the ribosome interact with GTP-bound translation factors. Is thus essential for accurate translation. In Staphylococcus saprophyticus subsp. saprophyticus (strain ATCC 15305 / DSM 20229 / NCIMB 8711 / NCTC 7292 / S-41), this protein is Large ribosomal subunit protein bL12.